A 431-amino-acid chain; its full sequence is Tol-Pal system protein TolB (431 aa).

The signal sequence occupies residues 1–26; sequence MSLMTKLGFRALVASCLITAGSAANA. The segment at 411 to 431 is disordered; sequence PQILSVQGGSVREPSWGPFMQ.

It belongs to the TolB family. As to quaternary structure, the Tol-Pal system is composed of five core proteins: the inner membrane proteins TolA, TolQ and TolR, the periplasmic protein TolB and the outer membrane protein Pal. They form a network linking the inner and outer membranes and the peptidoglycan layer.

Its subcellular location is the periplasm. In terms of biological role, part of the Tol-Pal system, which plays a role in outer membrane invagination during cell division and is important for maintaining outer membrane integrity. This is Tol-Pal system protein TolB from Burkholderia lata (strain ATCC 17760 / DSM 23089 / LMG 22485 / NCIMB 9086 / R18194 / 383).